We begin with the raw amino-acid sequence, 728 residues long: E3 ubiquitin-protein ligase TRIM36 (728 aa).

Residues 33–84 (CPACKELFTHPLILPCQHSICHKCVKELLLTLDDSFNDVGSDNSNQSSPRLR) form an RING-type; degenerate zinc finger. B box-type zinc fingers lie at residues 154–192 (AIMC…WGTI) and 207–249 (PKIL…VTTM). The Zn(2+) site is built by C212, H215, C235, and H241. Residues 271–345 (ESQVKSQISE…MEEYQGLLEN (75 aa)) are a coiled coil. The 58-residue stretch at 356 to 413 (LKETDQSCFVQTAKQLHLRIQKATESLKSFRPAAQTSFEDYVVNTSKQTELLGELSFF) folds into the COS domain. The 92-residue stretch at 419 to 510 (VPEINEEQSK…RELILHTPPA (92 aa)) folds into the Fibronectin type-III domain. Residues 508-720 (PPAPVFSFLF…IQLEEPITAK (213 aa)) enclose the B30.2/SPRY domain.

The protein belongs to the TRIM/RBCC family. Interacts with CENPH. In terms of tissue distribution, highly expressed in testis, prostate and brain. Weakly expressed in kidney, lung and heart. Expressed in fetal tissues.

Its subcellular location is the cytoplasm. It is found in the cytoplasmic vesicle. The protein localises to the secretory vesicle. It localises to the acrosome. The protein resides in the cytoskeleton. It catalyses the reaction S-ubiquitinyl-[E2 ubiquitin-conjugating enzyme]-L-cysteine + [acceptor protein]-L-lysine = [E2 ubiquitin-conjugating enzyme]-L-cysteine + N(6)-ubiquitinyl-[acceptor protein]-L-lysine.. E3 ubiquitin-protein ligase which mediates ubiquitination and subsequent proteasomal degradation of target proteins. Involved in chromosome segregation and cell cycle regulation. May play a role in the acrosome reaction and fertilization. This is E3 ubiquitin-protein ligase TRIM36 (TRIM36) from Homo sapiens (Human).